Reading from the N-terminus, the 181-residue chain is Adenine phosphoribosyltransferase (181 aa).

It belongs to the purine/pyrimidine phosphoribosyltransferase family. Homodimer.

Its subcellular location is the cytoplasm. It catalyses the reaction AMP + diphosphate = 5-phospho-alpha-D-ribose 1-diphosphate + adenine. Its pathway is purine metabolism; AMP biosynthesis via salvage pathway; AMP from adenine: step 1/1. Catalyzes a salvage reaction resulting in the formation of AMP, that is energically less costly than de novo synthesis. In Aliivibrio salmonicida (strain LFI1238) (Vibrio salmonicida (strain LFI1238)), this protein is Adenine phosphoribosyltransferase.